Consider the following 463-residue polypeptide: MAIAENYDEVLKGKYPAKDHARKVAKWIVDKGGDKKGTIYLEAQKQKLNEDNDGEAPFRQRRYFFYLSGCELPDSYLTYDFPSDKLTLFIPPVEPEEVIWSGLPMSPEEAKAKYDIDDCKTTKEVNPHLASSSETAQSTIYAIPGQISDETTFLSYQNKDLEQLKTAIEYCRVTKSDYEIALIRKANVISTNAHINVMKAAAKAQNECELEAVFLKSCVERNAKNQAYHSIVAAGENGATLHYVHNAAPIKSQNLMLLDAGCEVDCYASDITRTFPIKGTFTDESLAIYKIVLDMQKQCINALKAGVLWDSIHELAHKIAIKGLLELGILKGDVEQIFKARTSVAFFPHGLGHYLGMDTHDTGGNANYADKDRMFRYLRVRGTLPARSVITVEPGIYFCRFIIEPYLKDDQQKQYIDEKVLEKYWSVGGVRIEDNILVTEDGIENLTPTPKEIDEITSLVKSG.

The Mn(2+) site is built by Asp-259, Asp-270, Glu-393, and Glu-433.

This sequence belongs to the peptidase M24B family. The cofactor is Mn(2+).

It catalyses the reaction Release of any N-terminal amino acid, including proline, that is linked to proline, even from a dipeptide or tripeptide.. Catalyzes the removal of a penultimate prolyl residue from the N-termini of peptides. In Phaeosphaeria nodorum (strain SN15 / ATCC MYA-4574 / FGSC 10173) (Glume blotch fungus), this protein is Probable Xaa-Pro aminopeptidase PEPP (PEPP).